Here is a 1030-residue protein sequence, read N- to C-terminus: Kinesin-related protein 6 (1030 aa).

The SAM domain occupies 3-66 (FENDQLYNWL…FHLLQQLKKQ (64 aa)). 2 disordered regions span residues 66-164 (QTPP…SDFM) and 178-308 (RQQY…EDDD). Residues 68–80 (PPISNTSSPVINS) are compositionally biased toward polar residues. Low complexity-rich tracts occupy residues 81–117 (NNNNNNNNNNNNNNNNNNNNNNNNNNNNNNNNNNNNN), 125–164 (TSTSSLLSNNNLMSTQTQQSSSSSSSSSLSSKSNSNSDFM), 181–197 (YAKQQQQQQSTQTKYQS), and 225–238 (QQQQQQQQQQQQQD). The span at 239–290 (FEFEEEEEEEDQQQQYDEEEEEEEEYEEDFYKEDLGEIDDGNVLDISDDEPD) shows a compositional bias: acidic residues. The Kinesin motor domain occupies 453–775 (RIRVCVRKRP…LRYADRVKEL (323 aa)). ATP is bound at residue 543–550 (GQTGSGKT). 3 stretches are compositionally biased toward low complexity: residues 826 to 839 (INSQQPIIQQTSQP), 849 to 906 (QQQE…QTQP), and 981 to 1009 (PIQQQQQQQQPIQQQQQSTPQPSQLQTPQ). Disordered stretches follow at residues 826–915 (INSQ…KIDF) and 981–1030 (PIQQ…SSRN).

This sequence belongs to the TRAFAC class myosin-kinesin ATPase superfamily. Kinesin family.

Its subcellular location is the cytoplasm. The protein localises to the cytoskeleton. In terms of biological role, microtubule-associated force-producing protein that plays a role in organelle transport. Its motor activity is directed toward the microtubule's plus end. In Dictyostelium discoideum (Social amoeba), this protein is Kinesin-related protein 6 (kif6).